We begin with the raw amino-acid sequence, 325 residues long: DNA-directed RNA polymerase subunit alpha (325 aa).

Positions 1-231 are alpha N-terminal domain (alpha-NTD); the sequence is MQTSLLKPKI…DQLSVFAALE (231 aa). An alpha C-terminal domain (alpha-CTD) region spans residues 246–325; that stretch reads IDPILLRPVD…ENWPPAGLDK (80 aa).

This sequence belongs to the RNA polymerase alpha chain family. As to quaternary structure, homodimer. The RNAP catalytic core consists of 2 alpha, 1 beta, 1 beta' and 1 omega subunit. When a sigma factor is associated with the core the holoenzyme is formed, which can initiate transcription.

The catalysed reaction is RNA(n) + a ribonucleoside 5'-triphosphate = RNA(n+1) + diphosphate. Its function is as follows. DNA-dependent RNA polymerase catalyzes the transcription of DNA into RNA using the four ribonucleoside triphosphates as substrates. In Paraburkholderia phymatum (strain DSM 17167 / CIP 108236 / LMG 21445 / STM815) (Burkholderia phymatum), this protein is DNA-directed RNA polymerase subunit alpha.